We begin with the raw amino-acid sequence, 570 residues long: MPDSGNIQLDTLQHKDHSQETTSHYEGGSQLPEQESLDTNIQDDSVEYPGLIRVILITMGVALCSFCVGLDNTILATAIPKITSEFNSLEDMSWYVSAYLLVTSAFILSFGKIYTYYSVKWTYLISLGLFELGSLICAITPSSAGLIVGRAISGLGSAGLFPGSVIILSNIAPLHQRPLLTAFIGIMSGIATVTGPILGGVFTDRLSWRWCFYINLPIGGVTAVVVFLFMKTMKVKKNVPTSQKIKGLDWIGTAVFIPAIVSLLLALQWGGARYNWQNVRIIMLFIIAGVLGMVWLLIQRWKKEEATIPPRLMQRRSVVGTCIYTIPFVGCVIVLGYYLPIWFQSVKGVSASQSGIMNLPTVVGTIVVGLLSSVLIMRVGYMMPFLVLGSVMLAVGAGLCSTFQRSSGSAEWIGYQAMIGMGAGLGYQLPLLVVQADVPAADVPVATAVVIFMQNLAGSIFSAIAQTVFQNQLANSVQILAPSVNPESILDGGTVDLSDRFPSDVLPSILQAYNTAVTHTFYAGVAAASLSVFGAFIVRWNVSVKKKVPPEPLVPGGSHSGAERDSKNGT.

Over residues 1–11 (MPDSGNIQLDT) the composition is skewed to polar residues. The segment at 1–34 (MPDSGNIQLDTLQHKDHSQETTSHYEGGSQLPEQ) is disordered. A run of 14 helical transmembrane segments spans residues 50–70 (GLIR…CVGL), 94–114 (WYVS…GKIY), 121–141 (WTYL…AITP), 151–171 (AISG…LSNI), 182–202 (AFIG…GGVF), 210–230 (WCFY…FLFM), 247–267 (GLDW…LLAL), 278–298 (NVRI…WLLI), 323–343 (IYTI…PIWF), 356–376 (IMNL…SVLI), 379–399 (VGYM…GAGL), 413–433 (IGYQ…PLLV), 445–465 (VATA…SAIA), and 517–537 (VTHT…GAFI). An N-linked (GlcNAc...) asparagine glycan is attached at N541. The interval 550–570 (PEPLVPGGSHSGAERDSKNGT) is disordered. Residues 561 to 570 (GAERDSKNGT) show a composition bias toward basic and acidic residues.

It belongs to the major facilitator superfamily. TCR/Tet family.

The protein resides in the cell membrane. Functionally, MFS-type transporter; part of the gene cluster that mediates the biosynthesis of the indole diterpenes penitrems. May be involved in the efflux of penitrems. This Penicillium ochrochloron protein is MFS-type transporter ptmT.